A 156-amino-acid polypeptide reads, in one-letter code: Putative pre-16S rRNA nuclease (156 aa).

The protein belongs to the YqgF nuclease family.

The protein resides in the cytoplasm. Could be a nuclease involved in processing of the 5'-end of pre-16S rRNA. In Nocardioides sp. (strain ATCC BAA-499 / JS614), this protein is Putative pre-16S rRNA nuclease.